Reading from the N-terminus, the 1316-residue chain is Serine/threonine-protein kinase 36 (1316 aa).

Residues 4–254 (YHVLEMIGEG…WPDLLHHPFI (251 aa)) enclose the Protein kinase domain. ATP-binding positions include 10 to 18 (IGEGSFGRV) and K33. D125 acts as the Proton acceptor in catalysis. The tract at residues 389–418 (QGFPEPRPEAMGRQSTDVVDPENEEPDSDD) is disordered. Residues 407 to 418 (VDPENEEPDSDD) are compositionally biased toward acidic residues.

The protein belongs to the protein kinase superfamily. Ser/Thr protein kinase family. In terms of assembly, interacts with SPAG16 and KIF27. Mg(2+) serves as cofactor. As to expression, weakly expressed in the heart and thymus, present at moderate to high levels in the lungs, pancreas, and kidneys and at higher levels in the brain and cerebellum. Very highly expressed in the testis.

The protein resides in the cytoplasm. It localises to the nucleus. It is found in the cytoskeleton. The protein localises to the cilium axoneme. It carries out the reaction L-seryl-[protein] + ATP = O-phospho-L-seryl-[protein] + ADP + H(+). It catalyses the reaction L-threonyl-[protein] + ATP = O-phospho-L-threonyl-[protein] + ADP + H(+). Its function is as follows. Serine/threonine protein kinase which plays an important role in the sonic hedgehog (Shh) pathway by regulating the activity of GLI transcription factors. Controls the activity of the transcriptional regulators GLI1, GLI2 and GLI3 by opposing the effect of SUFU and promoting their nuclear localization. GLI2 requires an additional function of STK36 to become transcriptionally active, but the enzyme does not need to possess an active kinase catalytic site for this to occur. Required for postnatal development, possibly by regulating the homeostasis of cerebral spinal fluid or ciliary function. Essential for construction of the central pair apparatus of motile cilia. In Mus musculus (Mouse), this protein is Serine/threonine-protein kinase 36.